A 172-amino-acid chain; its full sequence is Large ribosomal subunit protein uL10 (172 aa).

It belongs to the universal ribosomal protein uL10 family. Part of the ribosomal stalk of the 50S ribosomal subunit. The N-terminus interacts with L11 and the large rRNA to form the base of the stalk. The C-terminus forms an elongated spine to which L12 dimers bind in a sequential fashion forming a multimeric L10(L12)X complex.

Forms part of the ribosomal stalk, playing a central role in the interaction of the ribosome with GTP-bound translation factors. The sequence is that of Large ribosomal subunit protein uL10 from Chlamydia trachomatis serovar L2 (strain ATCC VR-902B / DSM 19102 / 434/Bu).